A 279-amino-acid polypeptide reads, in one-letter code: HTH-type transcriptional regulator BhcR (279 aa).

A compositionally biased stretch (basic residues) spans 1-13 (MSVQIRKRGRPRG). The segment at 1-21 (MSVQIRKRGRPRGRAGGLGAE) is disordered. Positions 26–87 (IRALDRALDI…SQTQAWHVGP (62 aa)) constitute an HTH iclR-type domain. A DNA-binding region (H-T-H motif) is located at residues 47-66 (LTEIAQRLDMAPSTVHRVLV). The region spanning 102-271 (LVERARPLLR…ARELSFGMAP (170 aa)) is the IclR-ED domain.

Functionally, transcriptional regulator of the bhc gene cluster involved in glycolate and glyoxylate assimilation via the beta-hydroxyaspartate cycle (BHAC). Glyoxylate negatively affects the interaction of BhcR with the promoter region of the bhc gene cluster. The protein is HTH-type transcriptional regulator BhcR of Paracoccus denitrificans (strain Pd 1222).